The chain runs to 290 residues: 4-hydroxybenzoate octaprenyltransferase (290 aa).

Transmembrane regions (helical) follow at residues 33–53 (LAAL…AVFV), 91–111 (LGVR…FVLV), 116–136 (WEAV…PFTK), 138–158 (FFAM…VIAF), 165–185 (VPAT…AYDT), 212–232 (VAAI…VLAP), 237–257 (WPLW…FTLI), and 269–289 (FSKS…GYLL).

Belongs to the UbiA prenyltransferase family. The cofactor is Mg(2+).

The protein localises to the cell inner membrane. It carries out the reaction all-trans-octaprenyl diphosphate + 4-hydroxybenzoate = 4-hydroxy-3-(all-trans-octaprenyl)benzoate + diphosphate. It functions in the pathway cofactor biosynthesis; ubiquinone biosynthesis. Catalyzes the prenylation of para-hydroxybenzoate (PHB) with an all-trans polyprenyl group. Mediates the second step in the final reaction sequence of ubiquinone-8 (UQ-8) biosynthesis, which is the condensation of the polyisoprenoid side chain with PHB, generating the first membrane-bound Q intermediate 3-octaprenyl-4-hydroxybenzoate. This Acidovorax ebreus (strain TPSY) (Diaphorobacter sp. (strain TPSY)) protein is 4-hydroxybenzoate octaprenyltransferase.